The chain runs to 273 residues: 2,3,4,5-tetrahydropyridine-2,6-dicarboxylate N-succinyltransferase (273 aa).

Belongs to the transferase hexapeptide repeat family.

The protein localises to the cytoplasm. It carries out the reaction (S)-2,3,4,5-tetrahydrodipicolinate + succinyl-CoA + H2O = (S)-2-succinylamino-6-oxoheptanedioate + CoA. The protein operates within amino-acid biosynthesis; L-lysine biosynthesis via DAP pathway; LL-2,6-diaminopimelate from (S)-tetrahydrodipicolinate (succinylase route): step 1/3. The chain is 2,3,4,5-tetrahydropyridine-2,6-dicarboxylate N-succinyltransferase from Acinetobacter baumannii (strain AB307-0294).